A 716-amino-acid chain; its full sequence is 1,4-alpha-glucan branching enzyme GlgB (716 aa).

Aspartate 399 functions as the Nucleophile in the catalytic mechanism. The Proton donor role is filled by glutamate 452.

This sequence belongs to the glycosyl hydrolase 13 family. GlgB subfamily. Monomer.

It catalyses the reaction Transfers a segment of a (1-&gt;4)-alpha-D-glucan chain to a primary hydroxy group in a similar glucan chain.. Its pathway is glycan biosynthesis; glycogen biosynthesis. Functionally, catalyzes the formation of the alpha-1,6-glucosidic linkages in glycogen by scission of a 1,4-alpha-linked oligosaccharide from growing alpha-1,4-glucan chains and the subsequent attachment of the oligosaccharide to the alpha-1,6 position. In Rhodopseudomonas palustris (strain BisB5), this protein is 1,4-alpha-glucan branching enzyme GlgB.